The chain runs to 454 residues: tRNA-2-methylthio-N(6)-dimethylallyladenosine synthase (454 aa).

One can recognise an MTTase N-terminal domain in the interval 11 to 128 (KKLYIQTHGC…LPEMIETPRE (118 aa)). 6 residues coordinate [4Fe-4S] cluster: Cys20, Cys57, Cys91, Cys165, Cys169, and Cys172. In terms of domain architecture, Radical SAM core spans 151–382 (EADGATAFVS…QTRIIQQAQE (232 aa)). The 65-residue stretch at 385–449 (RRMVGNTERV…PNSLRGVLLG (65 aa)) folds into the TRAM domain.

Belongs to the methylthiotransferase family. MiaB subfamily. In terms of assembly, monomer. [4Fe-4S] cluster is required as a cofactor.

The protein localises to the cytoplasm. The catalysed reaction is N(6)-dimethylallyladenosine(37) in tRNA + (sulfur carrier)-SH + AH2 + 2 S-adenosyl-L-methionine = 2-methylsulfanyl-N(6)-dimethylallyladenosine(37) in tRNA + (sulfur carrier)-H + 5'-deoxyadenosine + L-methionine + A + S-adenosyl-L-homocysteine + 2 H(+). Catalyzes the methylthiolation of N6-(dimethylallyl)adenosine (i(6)A), leading to the formation of 2-methylthio-N6-(dimethylallyl)adenosine (ms(2)i(6)A) at position 37 in tRNAs that read codons beginning with uridine. The polypeptide is tRNA-2-methylthio-N(6)-dimethylallyladenosine synthase (Saccharophagus degradans (strain 2-40 / ATCC 43961 / DSM 17024)).